Here is a 141-residue protein sequence, read N- to C-terminus: MKLTITEIQEILPHRYPFLLLDSVEEVIPGERVVAKKNVTVNEQVFQGHFPGNPVLPGVLIIESLAQAGAVALLSMPEFKGKTAYFGGLDKAKFRQKVTPGDTLILEVELLKVRASAGMGKGVAKVNGKKVAEAELTFMIG.

The active site involves histidine 49.

The protein belongs to the thioester dehydratase family. FabZ subfamily.

It localises to the cytoplasm. It catalyses the reaction a (3R)-hydroxyacyl-[ACP] = a (2E)-enoyl-[ACP] + H2O. Its function is as follows. Involved in unsaturated fatty acids biosynthesis. Catalyzes the dehydration of short chain beta-hydroxyacyl-ACPs and long chain saturated and unsaturated beta-hydroxyacyl-ACPs. The protein is 3-hydroxyacyl-[acyl-carrier-protein] dehydratase FabZ (fabZ2) of Enterococcus faecalis (strain ATCC 700802 / V583).